A 262-amino-acid chain; its full sequence is Small ribosomal subunit protein eS1z (262 aa).

Residues 1–18 (MAVGKNKRISKGRKGGKK) show a composition bias toward basic residues. Residues 1 to 21 (MAVGKNKRISKGRKGGKKKAV) are disordered.

The protein belongs to the eukaryotic ribosomal protein eS1 family. In terms of assembly, component of the small ribosomal subunit. Mature ribosomes consist of a small (40S) and a large (60S) subunit. The 40S subunit contains about 33 different proteins and 1 molecule of RNA (18S). The 60S subunit contains about 49 different proteins and 3 molecules of RNA (25S, 5.8S and 5S).

It localises to the cytoplasm. This Arabidopsis thaliana (Mouse-ear cress) protein is Small ribosomal subunit protein eS1z.